A 59-amino-acid chain; its full sequence is Ribosome biogenesis protein Nop10 (59 aa).

Belongs to the NOP10 family.

Functionally, involved in ribosome biogenesis; more specifically in 18S rRNA pseudouridylation and in cleavage of pre-rRNA. The sequence is that of Ribosome biogenesis protein Nop10 from Thermococcus sibiricus (strain DSM 12597 / MM 739).